Reading from the N-terminus, the 478-residue chain is Elongation factor Tu, chloroplastic (478 aa).

Residues 1–29 are compositionally biased toward low complexity; that stretch reads MASISAATATSSTKLVSSNSTNPLLPSST. A disordered region spans residues 1–31; that stretch reads MASISAATATSSTKLVSSNSTNPLLPSSTKP. Residues 1-69 constitute a chloroplast transit peptide; the sequence is MASISAATAT…THRHRRFTVR (69 aa). Residues 79–283 form the tr-type G domain; it reads KPHVNIGTIG…AVDSYIPIPV (205 aa). Residues 88–95 are G1; the sequence is GHVDHGKT. Residue 88-95 participates in GTP binding; that stretch reads GHVDHGKT. Positions 129–133 are G2; it reads GITIN. The G3 stretch occupies residues 150 to 153; that stretch reads DCPG. Residues 150-154 and 205-208 each bind GTP; these read DCPGH and NKQD. The tract at residues 205-208 is G4; it reads NKQD. The tract at residues 243–245 is G5; the sequence is SAL.

The protein belongs to the TRAFAC class translation factor GTPase superfamily. Classic translation factor GTPase family. EF-Tu/EF-1A subfamily.

It localises to the plastid. It is found in the chloroplast. Its function is as follows. This protein promotes the GTP-dependent binding of aminoacyl-tRNA to the A-site of ribosomes during protein biosynthesis. This chain is Elongation factor Tu, chloroplastic (TUFA), found in Nicotiana tabacum (Common tobacco).